The sequence spans 158 residues: Proteinase inhibitor type-2 (158 aa).

The signal sequence occupies residues 1-24 (MAIHKEVSFLAYLLVLGMLLFVSA). 2 consecutive repeat copies span residues 29-86 (DAKA…HPKN) and 87-146 (PKAC…IEPK). 8 disulfides stabilise this stretch: cysteine 33-cysteine 121, cysteine 37-cysteine 117, cysteine 45-cysteine 127, cysteine 57-cysteine 94, cysteine 60-cysteine 78, cysteine 61-cysteine 90, cysteine 67-cysteine 103, and cysteine 120-cysteine 138.

The protein belongs to the protease inhibitor I20 (potato type II proteinase inhibitor) family.

This is Proteinase inhibitor type-2 from Solanum tuberosum (Potato).